We begin with the raw amino-acid sequence, 29 residues long: Cyclotide mela-4 (29 aa).

The cyclopeptide (Gly-Asn) cross-link spans 1-29 (GKPICGETCFKGKCYTPGCTCSYPICKKN). Disulfide bonds link C5-C19, C9-C21, and C14-C26.

This is a cyclic peptide. Post-translationally, contains 3 disulfide bonds.

Probably participates in a plant defense mechanism (Potential). Binds to and induces leakage in phospholipd membranes, particularly ones containing 1-palmitoyl-2-oleophosphatidylethanolamine (POPE). In vitro, displays cytotoxicity against cultured cells. Not active against Gram-negative bacterium E.coli ATCC 25922 or Gram-positive bacterium S.aureus ATCC 25923 up to a concentration of 64 uM. This is Cyclotide mela-4 from Melicytus latifolius (Norfolk Island mahoe).